The sequence spans 744 residues: Collagen alpha-1(VIII) chain (744 aa).

A signal peptide spans 1 to 27 (MAVPPGPPQLLQVLLTISLGSIRLIQA). The nonhelical region (NC2) stretch occupies residues 29–117 (AYYGIKPLPP…GKEIPLASLR (89 aa)). A compositionally biased stretch (basic and acidic residues) spans 101–110 (KEAVPKKGKE). Disordered stretches follow at residues 101–435 (KEAV…GLQG) and 478–584 (LLGP…QGEY). The tract at residues 118-571 (GEQGPRGEPG…PGPPGPPGPP (454 aa)) is triple-helical region. The span at 128-137 (PRGPPGPPGL) shows a compositional bias: pro residues. Positions 168 to 190 (KPGAMGMPGAKGEIGPKGEIGPM) are enriched in low complexity. Gly residues predominate over residues 203-217 (GLPGIGKPGGPGLPG). Residues 288-298 (KPGPPGEPGPQ) show a composition bias toward pro residues. Residues 328–337 (GFPGGKGEQG) are compositionally biased toward gly residues. A compositionally biased stretch (pro residues) spans 389-403 (PGEPGLPGIPGPMGP). A compositionally biased stretch (gly residues) spans 411–420 (GPKGEGGIVG). Low complexity-rich tracts occupy residues 478–506 (LLGP…TGPS) and 540–556 (LHGP…QGQP). The segment covering 558 to 579 (LPGPPGPPGPPGPPAVMPPTPA) has biased composition (pro residues). The tract at residues 572-744 (AVMPPTPAPQ…SFSGYLLYPM (173 aa)) is nonhelical region (NC1). The C1q domain maps to 611-744 (PAYEMPAFTA…SFSGYLLYPM (134 aa)).

In terms of assembly, homotrimers, or heterotrimers in association with alpha 2(VIII) type collagens. Four homotrimers can form a tetrahedron stabilized by central interacting C-terminal NC1 trimers. Post-translationally, prolines at the third position of the tripeptide repeating unit (G-X-Y) are hydroxylated in some or all of the chains. In terms of processing, proteolytically cleaved by neutrophil elastase, in vitro. Proteolytic processing produces the C-terminal NC1 domain fragment, vastatin.

The protein resides in the secreted. Its subcellular location is the extracellular space. It localises to the extracellular matrix. The protein localises to the basement membrane. Its function is as follows. Macromolecular component of the subendothelium. Major component of the Descemet's membrane (basement membrane) of corneal endothelial cells. Also a component of the endothelia of blood vessels. Necessary for migration and proliferation of vascular smooth muscle cells and thus, has a potential role in the maintenance of vessel wall integrity and structure, in particular in atherogenesis. Functionally, vastatin, the C-terminal fragment comprising the NC1 domain, inhibits aortic endothelial cell proliferation and causes cell apoptosis. This chain is Collagen alpha-1(VIII) chain (COL8A1), found in Oryctolagus cuniculus (Rabbit).